The sequence spans 513 residues: Xylose import ATP-binding protein XylG (513 aa).

ABC transporter domains are found at residues 5–242 and 259–505; these read LEMK…VGRE and LRIE…LRSE. 37-44 is a binding site for ATP; it reads GENGSGKS.

It belongs to the ABC transporter superfamily. Xylose importer (TC 3.A.1.2.4) family. As to quaternary structure, the complex is composed of two ATP-binding proteins (XylG), two transmembrane proteins (XylH) and a solute-binding protein (XylF).

Its subcellular location is the cell inner membrane. It catalyses the reaction D-xylose(out) + ATP + H2O = D-xylose(in) + ADP + phosphate + H(+). Part of the ABC transporter complex XylFGH involved in xylose import. Responsible for energy coupling to the transport system. The XylFGH system can also transport ribose in absence of xylose. The sequence is that of Xylose import ATP-binding protein XylG from Escherichia coli (strain K12).